The primary structure comprises 331 residues: Ferredoxin--NADP reductase 2 (331 aa).

Glu-37, Gln-45, Tyr-50, Val-90, Phe-124, Asp-286, and Thr-327 together coordinate FAD.

It belongs to the ferredoxin--NADP reductase type 2 family. Homodimer. FAD serves as cofactor.

The catalysed reaction is 2 reduced [2Fe-2S]-[ferredoxin] + NADP(+) + H(+) = 2 oxidized [2Fe-2S]-[ferredoxin] + NADPH. The sequence is that of Ferredoxin--NADP reductase 2 from Listeria welshimeri serovar 6b (strain ATCC 35897 / DSM 20650 / CCUG 15529 / CIP 8149 / NCTC 11857 / SLCC 5334 / V8).